Reading from the N-terminus, the 875-residue chain is MSCIQIISSSQTSIAGHRKLCNKLFTLRTQEGFETDILRALNIILTVKKGNSNADRVLRFLVTFVNYLQQKDPEIDIVQPILKHILRGLDAKDKTVRYRCCQIIARVVNCVKEIDDDLYNTLKEKLLSRVLDRESIVRLEAVVALSRLQEDTGDEENDVRNILLFLLQNDPSSEVRRSVLLNIEVSNSTLPFILERARDVDAANRKCVYARVLPKIGDFRYLSIKKRVRILKWGLNDRDESVEKAAADMLAYQWIENADNNLLELLERLDVSNNSDVAVLAIKKFFDVRVDSLSQLEFPEQFWLELTAESSLLARTFNEICIEKNYTDLLDKMPEVVQLTYYIERQYVSLRDKSSYDESCFIIEQLLYIGLSQDMVDEIGRRKLLKSLTNSLSTMALPDSLISLHIELLRKLCSSENDFCSLLVEIITEVFEQGHSQNQTEEQGNSNAPELNKNDYEGEEITVSQKSPSPSLPPNELNEPEPDDMDGYKEAFNELRCLSYVQCLFENITSSLNENLYMVDMLKTLIIPAVRSHDLPIREKGLECLSLVCLLNADLAFENVPLYLHCYEKGSVVLKCTAIRTLTDMLIQHGKAKFTEYEDAISSILFEALGEFENAELQTLGAEAIAKLLVILHYRDELFLKPLIIQYFEPNTVDNHALRQVLGYFFPVYAFGAHENQWRIATIFCDALLSLLEIYRDLDEDDVQLSIGHIAQQMLDWTDNEKLYERKTQTGDDYIALNHNVHLHLANMIFESLPNASEGKERKFMISLLGKLKIPTDLPSSDYQRTKRKLETYESHGFTMDSTSLSILAKFERMLLQNEEARSKFEETEEERLMENAEENEHAGAEAISGEIIPDTVEANMEDEEEVYVKQEEDL.

HEAT repeat units lie at residues 55–76 (DRVLRFLVTFVNYLQQKDPEID), 77–113 (IVQPILKHILRGLDAKDKTVRYRCCQIIARVVNCVKE), 117–154 (DLYNTLKEKLLSRVLDRESIVRLEAVVALSRLQEDTGD), 157–192 (NDVRNILLFLLQNDPSSEVRRSVLLNIEVSNSTLPF), 222–259 (LSIKKRVRILKWGLNDRDESVEKAAADMLAYQWIENAD), and 379–418 (IGRRKLLKSLTNSLSTMALPDSLISLHIELLRKLCSSEND). A disordered region spans residues 459 to 485 (EEITVSQKSPSPSLPPNELNEPEPDDM). HEAT repeat units follow at residues 516–554 (LYMVDMLKTLIIPAVRSHDLPIREKGLECLSLVCLLNAD), 556–591 (AFENVPLYLHCYEKGSVVLKCTAIRTLTDMLIQHGK), and 740–778 (NVHLHLANMIFESLPNASEGKERKFMISLLGKLKIPTDL). Positions 831-844 (ERLMENAEENEHAG) are enriched in basic and acidic residues. The segment at 831-875 (ERLMENAEENEHAGAEAISGEIIPDTVEANMEDEEEVYVKQEEDL) is disordered.

The protein belongs to the CND3 (condensin subunit 3) family. As to quaternary structure, component of the condensin complex, which contains the cut14/smc2 and cut3/smc2 heterodimer, and three non SMC subunits that probably regulate the complex: cnd1, cnd2 and cnd3.

It localises to the nucleus. The protein localises to the cytoplasm. Its subcellular location is the chromosome. Its function is as follows. Regulatory subunit of the condensin complex, a complex required for conversion of interphase chromatin into mitotic-like condense chromosomes. The condensin complex probably introduces positive supercoils into relaxed DNA in the presence of type I topoisomerases and converts nicked DNA into positive knotted forms in the presence of type II topoisomerases. The condensin complex probably also plays a role during interphase. The chain is Condensin complex subunit 3 (cnd3) from Schizosaccharomyces pombe (strain 972 / ATCC 24843) (Fission yeast).